We begin with the raw amino-acid sequence, 113 residues long: Hydrogenase maturation factor HypA (113 aa).

Histidine 2 lines the Ni(2+) pocket. Positions 73, 76, 89, and 92 each coordinate Zn(2+).

Belongs to the HypA/HybF family.

Its function is as follows. Involved in the maturation of [NiFe] hydrogenases. Required for nickel insertion into the metal center of the hydrogenase. This chain is Hydrogenase maturation factor HypA, found in Acidithiobacillus ferrooxidans (strain ATCC 23270 / DSM 14882 / CIP 104768 / NCIMB 8455) (Ferrobacillus ferrooxidans (strain ATCC 23270)).